We begin with the raw amino-acid sequence, 338 residues long: Cytochrome bd ubiquinol oxidase subunit 2 (338 aa).

9 helical membrane passes run 7 to 27, 50 to 70, 75 to 95, 119 to 139, 163 to 183, 196 to 216, 227 to 247, 256 to 276, and 306 to 326; these read LWFILVAVLFVGFFFLEGFDF, IGPFWDANEVWLLTGAGAIFA, WYATMLSGYYIPFVIVLLALM, VVFFGSLIPPFVLGVLFTTLF, ILGGVTVTLLCFQHGLMFITL, MAQKIMGVVFVAVLAFAALSA, EITIPLAVLIVICFMLAAVFI, FGMTGAGLALTVGMIFISLFP, and IAALTLLPFVIGSQIWSYYVF.

Belongs to the cytochrome ubiquinol oxidase subunit 2 family. As to quaternary structure, heterodimer of subunits I and II. Heme b serves as cofactor. It depends on heme d cis-diol as a cofactor.

It is found in the cell membrane. It carries out the reaction 2 a ubiquinol + O2(in) + 4 H(+)(in) = 2 a ubiquinone + 2 H2O(in) + 4 H(+)(out). This chain is Cytochrome bd ubiquinol oxidase subunit 2 (cydB), found in Bacillus subtilis (strain 168).